A 324-amino-acid chain; its full sequence is Zinc finger C2HC domain-containing protein 1A (324 aa).

A C2HC/C3H-type 1 zinc finger spans residues 15-44 (ELLPCKICGRTFFPVALKKHGPICKKTATK). Residues C19, C22, H34, and C38 each contribute to the Zn(2+) site. The interval 43 to 83 (TKKRKTFDSSRQRAEGTDIPTVKPLKPRPEPPKKPSNWRRK) is disordered. The span at 48–58 (TFDSSRQRAEG) shows a compositional bias: basic and acidic residues. Residues 118–147 (DYIQCPYCQRRFNENAADRHINFCKEQAAR) form a C2HC/C3H-type 2 zinc finger. Positions 122, 125, 137, and 141 each coordinate Zn(2+). Disordered stretches follow at residues 150–224 (NKGK…LSPS) and 236–259 (NVKP…LTNK). Composition is skewed to low complexity over residues 176-187 (SNSPGTASSGSS) and 196-215 (GKTV…SSLG). Position 222 is a phosphoserine (S222). A Phosphothreonine modification is found at T243. S291 is subject to Phosphoserine.

Belongs to the ZC2HC1 family. It depends on Zn(2+) as a cofactor.

This is Zinc finger C2HC domain-containing protein 1A (ZC2HC1A) from Pongo abelii (Sumatran orangutan).